A 144-amino-acid chain; its full sequence is C-C motif chemokine 25 (144 aa).

The N-terminal stretch at 1 to 23 (MKLWLFACLVACFVGAWMPVVHA) is a signal peptide. Intrachain disulfides connect Cys30–Cys58 and Cys31–Cys73. The disordered stretch occupies residues 98 to 144 (KSASDSQTERKKSNHMKSKVENPNSTSVRSATLGHPRMVMMPRKTNN). The segment covering 118-127 (ENPNSTSVRS) has biased composition (polar residues).

This sequence belongs to the intercrine beta (chemokine CC) family. Specifically expressed by thymic dendritic cells. High levels in thymus and small intestine.

It localises to the secreted. Potentially involved in T-cell development. Recombinant protein shows chemotactic activity on thymocytes, macrophages, THP-1 cells, and dendritics cells but is inactive on peripheral blood lymphocytes and neutrophils. Binds to CCR9. Binds to atypical chemokine receptor ACKR4 and mediates the recruitment of beta-arrestin (ARRB1/2) to ACKR4. This is C-C motif chemokine 25 (Ccl25) from Mus musculus (Mouse).